Consider the following 128-residue polypeptide: UPF0325 protein YaeH (128 aa).

Belongs to the UPF0325 family.

In Escherichia fergusonii (strain ATCC 35469 / DSM 13698 / CCUG 18766 / IAM 14443 / JCM 21226 / LMG 7866 / NBRC 102419 / NCTC 12128 / CDC 0568-73), this protein is UPF0325 protein YaeH.